The chain runs to 128 residues: Small ribosomal subunit protein uS11 (128 aa).

It belongs to the universal ribosomal protein uS11 family. In terms of assembly, part of the 30S ribosomal subunit. Interacts with proteins S7 and S18. Binds to IF-3.

Its function is as follows. Located on the platform of the 30S subunit, it bridges several disparate RNA helices of the 16S rRNA. Forms part of the Shine-Dalgarno cleft in the 70S ribosome. This chain is Small ribosomal subunit protein uS11, found in Leuconostoc mesenteroides subsp. mesenteroides (strain ATCC 8293 / DSM 20343 / BCRC 11652 / CCM 1803 / JCM 6124 / NCDO 523 / NBRC 100496 / NCIMB 8023 / NCTC 12954 / NRRL B-1118 / 37Y).